The sequence spans 200 residues: NADH-ubiquinone oxidoreductase 21.3 kDa subunit (200 aa).

Helical transmembrane passes span 16–36, 48–68, and 105–125; these read IKSG…MASL, MHVF…GGIY, and FPVI…FAFS.

Complex I is composed of about 40 different subunits.

Its subcellular location is the mitochondrion inner membrane. It carries out the reaction a ubiquinone + NADH + 5 H(+)(in) = a ubiquinol + NAD(+) + 4 H(+)(out). Its function is as follows. Transfer of electrons from NADH to the respiratory chain. The immediate electron acceptor for the enzyme is believed to be ubiquinone. This chain is NADH-ubiquinone oxidoreductase 21.3 kDa subunit, found in Neurospora crassa (strain ATCC 24698 / 74-OR23-1A / CBS 708.71 / DSM 1257 / FGSC 987).